The following is a 290-amino-acid chain: uncharacterized protein (290 aa).

Lysine 203 acts as the Schiff-base intermediate with substrate in catalysis.

It belongs to the DeoC/FbaB aldolase family.

This is an uncharacterized protein from Pasteurella multocida (strain Pm70).